The primary structure comprises 457 residues: MTVTVRFAPSPTGYIHIGNTRTALSNWLYASKNNGKFILRYDDTDVERSKDEYAQAIAVDLDWLGVRPDRVEYQSKRFDIYAKAVEKLKTAGLLYACYETADELERRRKLRLARRWPPVYGREALKLTDAEKAALEAEGRKPHWRFLLPNFESDPFATQRTEVHWDDLVRGPQTVDLASMSDPILVREDGTYLYTLPSVVDDIDMGVTHIIRGDDHVTNTGVQISIFKALGATPPVFGHHNLLTTISGEGLSKRTGALSVGSLREAGYEPMAVASLAILIGTSESVTAAPDMAALAEHFDLASISKSSAKFDPSELDALNRSLLHEMPFEKAKPRLEALGICGAKAESFWLAVHGNLDRFSDVSHWWQVVSGDLPEAPDLSGEDRDFVRHAFDLLPPEPWNGQTWKSWTEAVKSATGRKGKNLFMPLRLALTGQAHGPELADLLVLVGLERTKSRRP.

The 'HIGH' region motif lies at 9-19 (PSPTGYIHIGN). A 'KMSKS' region motif is present at residues 250 to 254 (GLSKR). An ATP-binding site is contributed by Lys253.

It belongs to the class-I aminoacyl-tRNA synthetase family. Glutamate--tRNA ligase type 1 subfamily. As to quaternary structure, monomer.

The protein resides in the cytoplasm. The catalysed reaction is tRNA(Glu) + L-glutamate + ATP = L-glutamyl-tRNA(Glu) + AMP + diphosphate. Catalyzes the attachment of glutamate to tRNA(Glu) in a two-step reaction: glutamate is first activated by ATP to form Glu-AMP and then transferred to the acceptor end of tRNA(Glu). In Brucella melitensis biotype 1 (strain ATCC 23456 / CCUG 17765 / NCTC 10094 / 16M), this protein is Glutamate--tRNA ligase 2.